Here is a 136-residue protein sequence, read N- to C-terminus: Large-conductance mechanosensitive channel (136 aa).

The next 2 membrane-spanning stretches (helical) occupy residues 9 to 29 (AFAS…GAAF) and 79 to 99 (IQTV…LKAI).

It belongs to the MscL family. As to quaternary structure, homopentamer.

Its subcellular location is the cell inner membrane. Channel that opens in response to stretch forces in the membrane lipid bilayer. May participate in the regulation of osmotic pressure changes within the cell. In Shewanella sp. (strain W3-18-1), this protein is Large-conductance mechanosensitive channel.